Reading from the N-terminus, the 851-residue chain is Putative cell signaling protein (851 aa).

3 stretches are compositionally biased toward basic and acidic residues: residues 165 to 176 (KLNEQDGKKSDN), 196 to 223 (DQAREQGSKAKDKIKNDPDAQKAKEETK), and 767 to 781 (SEERQRSTEDPLSHD). Disordered regions lie at residues 165-223 (KLNE…EETK) and 714-781 (DDSE…LSHD).

In terms of processing, palmitoylated.

This is Putative cell signaling protein from Schizosaccharomyces pombe (strain 972 / ATCC 24843) (Fission yeast).